A 730-amino-acid chain; its full sequence is ATP-binding cassette sub-family D member 1 (730 aa).

4 helical membrane passes run 24 to 44, 137 to 157, 169 to 189, and 276 to 296; these read AFSYALVTSAILALTIKVTIP, FCLISRTFLSIYVAALEGALV, ALVLLKWFGIAIPATFVNSMI, and ANIITGPALSIGVIALTAHIL. The ABC transmembrane type-1 domain maps to 136–373; that stretch reads TFCLISRTFL…WFIMLEQFFM (238 aa). Residues 505 to 727 form the ABC transporter domain; sequence ISLRAVPVVT…MNSDEEQKGQ (223 aa). 538–545 is an ATP binding site; that stretch reads GPNGCGKS.

The protein belongs to the ABC transporter superfamily. ABCD family. Peroxisomal fatty acyl CoA transporter (TC 3.A.1.203) subfamily.

Its subcellular location is the peroxisome membrane. It carries out the reaction an acyl-CoA(out) + ATP + H2O = an acyl-CoA(in) + ADP + phosphate + H(+). Its function is as follows. Plays a role in the transport of free very-long-chain fatty acids (VLCFAs) as well as their CoA-esters across the peroxisomal membrane by acting as an ATP-specific binding subunit releasing ADP after ATP hydrolysis. Thus, plays a role in regulation of VLCFAs and energy metabolism namely, in the degradation and biosynthesis of fatty acids by beta-oxidation, mitochondrial function and microsomal fatty acid elongation. The sequence is that of ATP-binding cassette sub-family D member 1 from Drosophila melanogaster (Fruit fly).